The following is a 237-amino-acid chain: MVIVMYSIKMRASKNGKHISGAERIVNKDEIEETVKELVRRALTHENGTPDFINIKIEEIKEEITYINHLPIKTIHCKDKEEARETAKKILRNEGIPDSVIDYAYEIIDKGGMRGAAILNLKGERLEPDKERGVRVKNIDTTKELKEKILKENLGTERTVDAIAIASKVIHLGVIAELCTSDNKSYTTGYVATKKGYFRITNLKKEGESGGRVFFVKDDVDIEDLINKLENKPFIIK.

This sequence belongs to the BioW family. In terms of assembly, homodimer. Mg(2+) is required as a cofactor.

It catalyses the reaction heptanedioate + ATP + CoA = 6-carboxyhexanoyl-CoA + AMP + diphosphate. Its pathway is metabolic intermediate metabolism; pimeloyl-CoA biosynthesis; pimeloyl-CoA from pimelate: step 1/1. Functionally, catalyzes the transformation of pimelate into pimeloyl-CoA with concomitant hydrolysis of ATP to AMP. The polypeptide is 6-carboxyhexanoate--CoA ligase (Methanocaldococcus jannaschii (strain ATCC 43067 / DSM 2661 / JAL-1 / JCM 10045 / NBRC 100440) (Methanococcus jannaschii)).